The sequence spans 237 residues: MQKQAELYRGKAKTVYSTENPDLLVLEFRNDTSAGDGARIEQFDRKGMVNNKFNYFIMSKLAEAGIPTQMERLLSDTEALVKKLDMVPVECVIRNRAAGSLVKRLGIEEGIELNPPLFDLFLKNDAMHDPMVNESYCETFGWVSQENLARMKELTYKANDVLKKLFDDAGLILVDFKLEFGLFKGEVTLGDEFSPDGARLWDKQTMDKMDKDRFRQSLGGLIEAYEEVARRLGVNLD.

The protein belongs to the SAICAR synthetase family.

It catalyses the reaction 5-amino-1-(5-phospho-D-ribosyl)imidazole-4-carboxylate + L-aspartate + ATP = (2S)-2-[5-amino-1-(5-phospho-beta-D-ribosyl)imidazole-4-carboxamido]succinate + ADP + phosphate + 2 H(+). It functions in the pathway purine metabolism; IMP biosynthesis via de novo pathway; 5-amino-1-(5-phospho-D-ribosyl)imidazole-4-carboxamide from 5-amino-1-(5-phospho-D-ribosyl)imidazole-4-carboxylate: step 1/2. The chain is Phosphoribosylaminoimidazole-succinocarboxamide synthase from Cronobacter sakazakii (strain ATCC BAA-894) (Enterobacter sakazakii).